The sequence spans 444 residues: ATP-dependent protease ATPase subunit HslU (444 aa).

ATP contacts are provided by residues Ile20, 62 to 67, Asp257, Glu322, and Arg394; that span reads GVGKTE.

The protein belongs to the ClpX chaperone family. HslU subfamily. A double ring-shaped homohexamer of HslV is capped on each side by a ring-shaped HslU homohexamer. The assembly of the HslU/HslV complex is dependent on binding of ATP.

The protein resides in the cytoplasm. Functionally, ATPase subunit of a proteasome-like degradation complex; this subunit has chaperone activity. The binding of ATP and its subsequent hydrolysis by HslU are essential for unfolding of protein substrates subsequently hydrolyzed by HslV. HslU recognizes the N-terminal part of its protein substrates and unfolds these before they are guided to HslV for hydrolysis. The polypeptide is ATP-dependent protease ATPase subunit HslU (Bordetella avium (strain 197N)).